The chain runs to 213 residues: Protein nullo (213 aa).

Blastoderm. Throughout the entire cortex of the embryo although the distribution is not uniform.

In terms of biological role, actin-myosin network stability during cellularization. Might be involved in increasing actin-actin interactions or membrane-to-cytoskeleton attachments. nullo together with Sry-a and bnk may provide auxiliary functions, by acting both to stabilize a large and dynamic microfilament structure and regulate its functions. The protein is Protein nullo (nullo) of Drosophila melanogaster (Fruit fly).